A 244-amino-acid chain; its full sequence is Probable histone-lysine N-methyltransferase set-23 (244 aa).

A Pre-SET domain is found at 25–86; sequence EGCNCEAECS…SCRNRVVQCG (62 aa). Zn(2+) is bound by residues Cys27, Cys29, Cys33, Cys39, Cys41, Cys65, Cys69, Cys71, and Cys78. The SET domain maps to 89-213; sequence KKLEIFSTCE…RGEELCYDYG (125 aa). S-adenosyl-L-methionine is bound by residues 101-103, Asp141, Tyr143, Arg170, and 173-174; these read KGF and NH. The Zn(2+) site is built by Cys176, Cys225, Cys227, and Cys232. The region spanning 221 to 237 is the Post-SET domain; it reads NRKLCLCKSEKCRKYLP.

Belongs to the class V-like SAM-binding methyltransferase superfamily. Histone-lysine methyltransferase family. Suvar3-9 subfamily.

The protein resides in the nucleus. Its subcellular location is the chromosome. It carries out the reaction L-lysyl-[histone] + S-adenosyl-L-methionine = N(6)-methyl-L-lysyl-[histone] + S-adenosyl-L-homocysteine + H(+). In terms of biological role, probable histone methyltransferase. Required for embryonic development. The sequence is that of Probable histone-lysine N-methyltransferase set-23 (set-23) from Caenorhabditis elegans.